Reading from the N-terminus, the 577-residue chain is Phosphoethanolamine transferase EptC (577 aa).

A run of 5 helical transmembrane segments spans residues Leu17–Ile37, Asn44–Pro64, Ile69–Tyr89, Tyr119–Trp139, and Val154–Ile174.

This sequence belongs to the phosphoethanolamine transferase family. EptC/CptA subfamily. Forms a complex with an unidentified protein of approximately 36 kDa.

Its subcellular location is the cell inner membrane. It participates in bacterial outer membrane biogenesis; LPS core biosynthesis. Functionally, catalyzes the addition of a phosphoethanolamine moiety to the outer membrane lipopolysaccharide core. In Escherichia coli (strain K12), this protein is Phosphoethanolamine transferase EptC (eptC).